We begin with the raw amino-acid sequence, 134 residues long: DNA-binding protein StpA (134 aa).

The tract at residues 73 to 94 (EELLGNSSAAAPRAGKKRQPRP) is disordered. Residues 112–117 (QGRTPK) mediate DNA binding.

Belongs to the histone-like protein H-NS family. In terms of assembly, forms homodimers, can interact with H-NS. May interact with Hha and/or Cnu.

It localises to the cytoplasm. Its subcellular location is the nucleoid. A DNA-binding protein that acts in a fashion similar to H-NS, repressing gene transcription. A subset of H-NS/StpA-regulated genes require auxillary proteins for repression; these auxillary proteins (Hha and other similar proteins) may also modulate oligomerization of the H-NS/StpA complex. The sequence is that of DNA-binding protein StpA (stpA) from Escherichia coli O157:H7.